The chain runs to 304 residues: Homoserine O-acetyltransferase (304 aa).

Cysteine 142 acts as the Acyl-thioester intermediate in catalysis. 2 residues coordinate substrate: lysine 163 and serine 191. The active-site Proton acceptor is the histidine 234. Glutamate 236 is an active-site residue. Arginine 248 provides a ligand contact to substrate.

This sequence belongs to the MetA family.

It is found in the cytoplasm. The catalysed reaction is L-homoserine + acetyl-CoA = O-acetyl-L-homoserine + CoA. It functions in the pathway amino-acid biosynthesis; L-methionine biosynthesis via de novo pathway; O-acetyl-L-homoserine from L-homoserine: step 1/1. Transfers an acetyl group from acetyl-CoA to L-homoserine, forming acetyl-L-homoserine. In Thermotoga petrophila (strain ATCC BAA-488 / DSM 13995 / JCM 10881 / RKU-1), this protein is Homoserine O-acetyltransferase.